Consider the following 204-residue polypeptide: ATP phosphoribosyltransferase (204 aa).

It belongs to the ATP phosphoribosyltransferase family. Short subfamily. Heteromultimer composed of HisG and HisZ subunits.

The protein localises to the cytoplasm. The enzyme catalyses 1-(5-phospho-beta-D-ribosyl)-ATP + diphosphate = 5-phospho-alpha-D-ribose 1-diphosphate + ATP. It functions in the pathway amino-acid biosynthesis; L-histidine biosynthesis; L-histidine from 5-phospho-alpha-D-ribose 1-diphosphate: step 1/9. Its function is as follows. Catalyzes the condensation of ATP and 5-phosphoribose 1-diphosphate to form N'-(5'-phosphoribosyl)-ATP (PR-ATP). Has a crucial role in the pathway because the rate of histidine biosynthesis seems to be controlled primarily by regulation of HisG enzymatic activity. This is ATP phosphoribosyltransferase from Leptospira biflexa serovar Patoc (strain Patoc 1 / Ames).